The chain runs to 363 residues: Ribosomal RNA small subunit methyltransferase H (363 aa).

S-adenosyl-L-methionine contacts are provided by residues 55-57, Asp75, Asp122, and Gln129; that span reads GGH.

It belongs to the methyltransferase superfamily. RsmH family.

It localises to the cytoplasm. It catalyses the reaction cytidine(1402) in 16S rRNA + S-adenosyl-L-methionine = N(4)-methylcytidine(1402) in 16S rRNA + S-adenosyl-L-homocysteine + H(+). Functionally, specifically methylates the N4 position of cytidine in position 1402 (C1402) of 16S rRNA. This is Ribosomal RNA small subunit methyltransferase H from Bordetella petrii (strain ATCC BAA-461 / DSM 12804 / CCUG 43448).